The chain runs to 510 residues: Cobyric acid synthase (510 aa).

The region spanning 262 to 460 (EIKVGIIKLP…IHGIFENDEW (199 aa)) is the GATase cobBQ-type domain. C343 acts as the Nucleophile in catalysis. H452 is a catalytic residue.

It belongs to the CobB/CobQ family. CobQ subfamily.

The protein operates within cofactor biosynthesis; adenosylcobalamin biosynthesis. Its function is as follows. Catalyzes amidations at positions B, D, E, and G on adenosylcobyrinic A,C-diamide. NH(2) groups are provided by glutamine, and one molecule of ATP is hydrogenolyzed for each amidation. The protein is Cobyric acid synthase of Prochlorococcus marinus (strain MIT 9515).